Reading from the N-terminus, the 130-residue chain is Small ribosomal subunit protein uS8 (130 aa).

This sequence belongs to the universal ribosomal protein uS8 family. Part of the 30S ribosomal subunit. Contacts proteins S5 and S12.

Functionally, one of the primary rRNA binding proteins, it binds directly to 16S rRNA central domain where it helps coordinate assembly of the platform of the 30S subunit. The polypeptide is Small ribosomal subunit protein uS8 (Tolumonas auensis (strain DSM 9187 / NBRC 110442 / TA 4)).